The following is a 271-amino-acid chain: Effector CFEM6 (271 aa).

An N-terminal signal peptide occupies residues 1 to 17 (MKYSMITLGAFAMMAVA). A CFEM domain is found at 18–111 (QLSSLPACGQ…LGPATAVVAS (94 aa)). Intrachain disulfides connect C25/C68, C29/C63, C42/C49, and C51/C84. Heme is bound at residue D46. The GPI-anchor amidated serine moiety is linked to residue S247. The propeptide at 248 to 271 (SAGGARQTAFAGLAAAAGFAAIIL) is removed in mature form.

The protein belongs to the RBT5 family.

It localises to the cell membrane. The protein localises to the secreted. Its subcellular location is the host nucleus. The protein resides in the host cell membrane. It is found in the host chloroplast envelope. Appears to function during host infection, and may play a role in suppressing the host immune response. This chain is Effector CFEM6, found in Marssonina brunnea f. sp. multigermtubi (strain MB_m1) (Marssonina leaf spot fungus).